Reading from the N-terminus, the 285-residue chain is Phosphate import ATP-binding protein PstB (285 aa).

Residues 22 to 262 (MRAVDLTLGF…PQHEETVRYF (241 aa)) form the ABC transporter domain. Residue 54 to 61 (GPTGSGKT) coordinates ATP. Residues 266-285 (RPAQGSDRGSSQTAGVAESQ) form a disordered region. Over residues 272-285 (DRGSSQTAGVAESQ) the composition is skewed to polar residues.

The protein belongs to the ABC transporter superfamily. Phosphate importer (TC 3.A.1.7) family. As to quaternary structure, the complex is composed of two ATP-binding proteins (PstB), two transmembrane proteins (PstC and PstA) and a solute-binding protein (PstS).

Its subcellular location is the cell membrane. It catalyses the reaction phosphate(out) + ATP + H2O = ADP + 2 phosphate(in) + H(+). In terms of biological role, part of the ABC transporter complex PstSACB involved in phosphate import. Responsible for energy coupling to the transport system. The protein is Phosphate import ATP-binding protein PstB of Mycobacterium intracellulare.